Reading from the N-terminus, the 122-residue chain is Small ribosomal subunit protein uS13 (122 aa).

Residues 95–122 (GLPVRGQRTHTNARTRKGPAKSIAGKKK) form a disordered region.

This sequence belongs to the universal ribosomal protein uS13 family. As to quaternary structure, part of the 30S ribosomal subunit. Forms a loose heterodimer with protein S19. Forms two bridges to the 50S subunit in the 70S ribosome.

Located at the top of the head of the 30S subunit, it contacts several helices of the 16S rRNA. In the 70S ribosome it contacts the 23S rRNA (bridge B1a) and protein L5 of the 50S subunit (bridge B1b), connecting the 2 subunits; these bridges are implicated in subunit movement. Contacts the tRNAs in the A and P-sites. The sequence is that of Small ribosomal subunit protein uS13 from Nitrobacter winogradskyi (strain ATCC 25391 / DSM 10237 / CIP 104748 / NCIMB 11846 / Nb-255).